The chain runs to 547 residues: Phosphomethylpyrimidine synthase (547 aa).

The segment covering 1–15 has biased composition (polar residues); the sequence is MTETLSKTTEPSVTT. A disordered region spans residues 1–36; sequence MTETLSKTTEPSVTTGPIPGSSKAYREVANPDGGPS. Residues asparagine 150, methionine 179, tyrosine 208, histidine 244, 264 to 266, 305 to 308, and glutamate 344 contribute to the substrate site; these read SRG and DGLR. Zn(2+) is bound at residue histidine 348. Tyrosine 371 lines the substrate pocket. Histidine 412 contacts Zn(2+). Residues cysteine 492, cysteine 495, and cysteine 500 each contribute to the [4Fe-4S] cluster site.

Belongs to the ThiC family. [4Fe-4S] cluster is required as a cofactor.

It catalyses the reaction 5-amino-1-(5-phospho-beta-D-ribosyl)imidazole + S-adenosyl-L-methionine = 4-amino-2-methyl-5-(phosphooxymethyl)pyrimidine + CO + 5'-deoxyadenosine + formate + L-methionine + 3 H(+). Its pathway is cofactor biosynthesis; thiamine diphosphate biosynthesis. Functionally, catalyzes the synthesis of the hydroxymethylpyrimidine phosphate (HMP-P) moiety of thiamine from aminoimidazole ribotide (AIR) in a radical S-adenosyl-L-methionine (SAM)-dependent reaction. The protein is Phosphomethylpyrimidine synthase of Mycobacterium leprae (strain Br4923).